Reading from the N-terminus, the 144-residue chain is Galectin a (144 aa).

Residues D1–V138 enclose the Galectin domain.

In terms of assembly, tetramer.

In terms of biological role, lectin that binds beta-galactoside and a wide array of complex carbohydrates. This chain is Galectin a, found in Aplysina lactuca (Marine sponge).